We begin with the raw amino-acid sequence, 842 residues long: MVAKVTAARRVSCADENRTPGDASQATISAAPEDKKQGFPDIREDGVARGVSASCGAVQNAASAQVPGARTPGVIGVPVASKTVEEARGGGAKRVITKRVGGVFVLDDSAARPNRKAGNLASGARLSRFSRSDRQRSDGFSGTQARANAGGVRRGEGRPFARDFSRGSTGGYRPAVRGPARPAGRVGSGPRGPAPLQVGAGKPAQNKRSFRGRKQQTYQYQHKDRLELEEKLLQQKKKNKEKLAAVPRSVEIMESVSVADLAKKMNLKASELIGKLFGMGMMVTMNQSIDADTATILASEYGCEVRIVSLYDETIIESVGDEHAVLRARPPVVTVMGHVDHGKTKTLDAIRSTRVAEGEFGGITQHIGAYAVSTPKGSITFLDTPGHEAFTMMRARGAEITDIVVLIVAADDGVMPQTIEAINHAKASKVPIIVAINKIDRADANPNKVMTRLAELGLAPEEWGGDTMYVSISALQGIGLDLLLDAIMLQAEVMELRANYGCCAEGRIIESRIDHGRGIVASVIVRRGVLRVGDTYVAGVYSGRVRAIFNDQGEKIQEATPSMPVEILGLEGMPNAGDPFQVTDSERIARQISLKRQELRRYENARNVKRITLDKLYESIEKGSVSEFKVIIKGDVQGSVEALKQSLEKLSTDEVQLRVIHSSVGAINDSDVMLAAADSNVTIVGFNVRPTPQAAVLAERERVEIKKYTVIYQAVEEMERAMEGMLKPSLKEVVLGSAEVRKVFKIPKVGSVAGVYVLEGVMKRNAIVHVVRDGIVLHSGKVSSLRREKDDVKEVHSGFECGVGVENYFDFRERDRLECAEMKEVSRKLKDAALSDAARLQG.

2 disordered regions span residues 1–41 (MVAK…GFPD) and 112–219 (RPNR…QTYQ). Basic and acidic residues-rich tracts occupy residues 32 to 41 (PEDKKQGFPD) and 153 to 165 (RRGEGRPFARDFS). The tr-type G domain maps to 328–497 (ARPPVVTVMG…MLQAEVMELR (170 aa)). The tract at residues 337–344 (GHVDHGKT) is G1. 337-344 (GHVDHGKT) contacts GTP. The tract at residues 362 to 366 (GITQH) is G2. The interval 383–386 (DTPG) is G3. GTP-binding positions include 383 to 387 (DTPGH) and 437 to 440 (NKID). A G4 region spans residues 437-440 (NKID). Residues 473–475 (SAL) form a G5 region.

It belongs to the TRAFAC class translation factor GTPase superfamily. Classic translation factor GTPase family. IF-2 subfamily.

It is found in the cytoplasm. Its function is as follows. One of the essential components for the initiation of protein synthesis. Protects formylmethionyl-tRNA from spontaneous hydrolysis and promotes its binding to the 30S ribosomal subunits. Also involved in the hydrolysis of GTP during the formation of the 70S ribosomal complex. This chain is Translation initiation factor IF-2 (infB), found in Treponema pallidum (strain Nichols).